A 735-amino-acid chain; its full sequence is Photosystem I P700 chlorophyll a apoprotein A2 (735 aa).

8 helical membrane-spanning segments follow: residues 47–70, 136–159, 176–200, 274–292, 331–354, 370–396, 418–440, and 518–536; these read IFAS…FHVA, LYNG…LHLQ, LNHH…HVAI, MAHH…GHMY, LHFQ…QHMY, AALY…IFFI, AIIS…LYVH, and FLVH…LILV. Cys-560 and Cys-569 together coordinate [4Fe-4S] cluster. 2 helical membrane passes run 576 to 597 and 644 to 666; these read AFYL…YWHW and LSVW…MFLI. Chlorophyll a contacts are provided by His-655, Met-663, and Tyr-671. Position 672 (Trp-672) interacts with phylloquinone. Residues 708–728 traverse the membrane as a helical segment; it reads LVGLVHFSVGYIFTYAAFLIA.

This sequence belongs to the PsaA/PsaB family. As to quaternary structure, the PsaA/B heterodimer binds the P700 chlorophyll special pair and subsequent electron acceptors. PSI consists of a core antenna complex that captures photons, and an electron transfer chain that converts photonic excitation into a charge separation. The eukaryotic PSI reaction center is composed of at least 11 subunits. Requires P700 is a chlorophyll a/chlorophyll a' dimer, A0 is one or more chlorophyll a, A1 is one or both phylloquinones and FX is a shared 4Fe-4S iron-sulfur center. as cofactor.

It is found in the plastid. The protein resides in the chloroplast thylakoid membrane. The catalysed reaction is reduced [plastocyanin] + hnu + oxidized [2Fe-2S]-[ferredoxin] = oxidized [plastocyanin] + reduced [2Fe-2S]-[ferredoxin]. Functionally, psaA and PsaB bind P700, the primary electron donor of photosystem I (PSI), as well as the electron acceptors A0, A1 and FX. PSI is a plastocyanin/cytochrome c6-ferredoxin oxidoreductase, converting photonic excitation into a charge separation, which transfers an electron from the donor P700 chlorophyll pair to the spectroscopically characterized acceptors A0, A1, FX, FA and FB in turn. Oxidized P700 is reduced on the lumenal side of the thylakoid membrane by plastocyanin or cytochrome c6. This is Photosystem I P700 chlorophyll a apoprotein A2 from Stigeoclonium helveticum (Green alga).